Here is a 287-residue protein sequence, read N- to C-terminus: tRNA-cytidine(32) 2-sulfurtransferase (287 aa).

The PP-loop motif motif lies at 39-44 (SGGKDS). Positions 114, 117, and 205 each coordinate [4Fe-4S] cluster.

The protein belongs to the TtcA family. As to quaternary structure, homodimer. The cofactor is Mg(2+). It depends on [4Fe-4S] cluster as a cofactor.

The protein resides in the cytoplasm. The catalysed reaction is cytidine(32) in tRNA + S-sulfanyl-L-cysteinyl-[cysteine desulfurase] + AH2 + ATP = 2-thiocytidine(32) in tRNA + L-cysteinyl-[cysteine desulfurase] + A + AMP + diphosphate + H(+). It participates in tRNA modification. Its function is as follows. Catalyzes the ATP-dependent 2-thiolation of cytidine in position 32 of tRNA, to form 2-thiocytidine (s(2)C32). The sulfur atoms are provided by the cysteine/cysteine desulfurase (IscS) system. This chain is tRNA-cytidine(32) 2-sulfurtransferase, found in Dechloromonas aromatica (strain RCB).